Here is a 200-residue protein sequence, read N- to C-terminus: NADH-quinone oxidoreductase subunit C (200 aa).

The protein belongs to the complex I 30 kDa subunit family. As to quaternary structure, NDH-1 is composed of 14 different subunits. Subunits NuoB, C, D, E, F, and G constitute the peripheral sector of the complex.

It localises to the cell inner membrane. The enzyme catalyses a quinone + NADH + 5 H(+)(in) = a quinol + NAD(+) + 4 H(+)(out). Its function is as follows. NDH-1 shuttles electrons from NADH, via FMN and iron-sulfur (Fe-S) centers, to quinones in the respiratory chain. The immediate electron acceptor for the enzyme in this species is believed to be ubiquinone. Couples the redox reaction to proton translocation (for every two electrons transferred, four hydrogen ions are translocated across the cytoplasmic membrane), and thus conserves the redox energy in a proton gradient. The sequence is that of NADH-quinone oxidoreductase subunit C from Parvibaculum lavamentivorans (strain DS-1 / DSM 13023 / NCIMB 13966).